Consider the following 261-residue polypeptide: Segregation and condensation protein A (261 aa).

Belongs to the ScpA family. As to quaternary structure, component of a cohesin-like complex composed of ScpA, ScpB and the Smc homodimer, in which ScpA and ScpB bind to the head domain of Smc. The presence of the three proteins is required for the association of the complex with DNA.

The protein localises to the cytoplasm. Participates in chromosomal partition during cell division. May act via the formation of a condensin-like complex containing Smc and ScpB that pull DNA away from mid-cell into both cell halves. This is Segregation and condensation protein A from Leptospira interrogans serogroup Icterohaemorrhagiae serovar copenhageni (strain Fiocruz L1-130).